We begin with the raw amino-acid sequence, 174 residues long: ATP-dependent protease subunit HslV (174 aa).

Residue T2 is part of the active site. Na(+)-binding residues include G157, C160, and T163.

The protein belongs to the peptidase T1B family. HslV subfamily. In terms of assembly, a double ring-shaped homohexamer of HslV is capped on each side by a ring-shaped HslU homohexamer. The assembly of the HslU/HslV complex is dependent on binding of ATP.

The protein localises to the cytoplasm. It carries out the reaction ATP-dependent cleavage of peptide bonds with broad specificity.. Its activity is regulated as follows. Allosterically activated by HslU binding. In terms of biological role, protease subunit of a proteasome-like degradation complex believed to be a general protein degrading machinery. The polypeptide is ATP-dependent protease subunit HslV (Shewanella denitrificans (strain OS217 / ATCC BAA-1090 / DSM 15013)).